The following is a 228-amino-acid chain: Dolichyl-phosphate hexose transferase HVO_1613 (228 aa).

This sequence belongs to the glycosyltransferase 2 family.

Functionally, glycosyltransferase that adds a monosaccharide to dolichol phosphate, thereby being responsible for generating one of the three monosaccharide-modified dolichol phosphates. The subunit onto which additional sugars are added is not known. The sequence is that of Dolichyl-phosphate hexose transferase HVO_1613 from Haloferax volcanii (strain ATCC 29605 / DSM 3757 / JCM 8879 / NBRC 14742 / NCIMB 2012 / VKM B-1768 / DS2) (Halobacterium volcanii).